The primary structure comprises 374 residues: MGHEDRATALLTVDLDAIADNWLALRGRLRPGASCAGVVKANAYGLGARKVVPALLAAGCRDFVVAQIDEGLDILDLLPADARLFVLSGPPEGAEDEVLDSALIPVLNSPDQIDRWAKACARAGRKAPAALHVDTGMRRLGLTPLELDALLADPRPLAAFTPVLVMTHLACADEPDHPLNAEQRALFAAAAARFPGLRASLANTSGIFLGPEWHFDLARPGIGLYGGNPTVGTANPMRQVVKLQGKILQVRRIDTPLSVGYGATHTAPAGSTIATVGVGYADGFPRSAGNRAMGLLAGRSVPVVGRVSMDLLTFDVSDVPENLARPGAMIDLLGPDLSVDALADRADTVSYEILTRLGARYPRRYGGVREGSGQ.

Lys40 serves as the catalytic Proton acceptor; specific for D-alanine. Residue Lys40 is modified to N6-(pyridoxal phosphate)lysine. Residue Arg139 coordinates substrate. Catalysis depends on Tyr261, which acts as the Proton acceptor; specific for L-alanine. Met309 contacts substrate.

It belongs to the alanine racemase family. Pyridoxal 5'-phosphate serves as cofactor.

The enzyme catalyses L-alanine = D-alanine. Its pathway is amino-acid biosynthesis; D-alanine biosynthesis; D-alanine from L-alanine: step 1/1. In terms of biological role, catalyzes the interconversion of L-alanine and D-alanine. May also act on other amino acids. The chain is Alanine racemase (alr) from Rhodospirillum rubrum (strain ATCC 11170 / ATH 1.1.1 / DSM 467 / LMG 4362 / NCIMB 8255 / S1).